A 235-amino-acid chain; its full sequence is NADH-quinone oxidoreductase subunit B 2 (235 aa).

Residues M1–P14 are compositionally biased toward low complexity. Residues M1–L24 are disordered. Residues C63, C64, C129, and C159 each contribute to the [4Fe-4S] cluster site. The interval T188–R235 is disordered.

Belongs to the complex I 20 kDa subunit family. In terms of assembly, NDH-1 is composed of 14 different subunits. Subunits NuoB, C, D, E, F, and G constitute the peripheral sector of the complex. [4Fe-4S] cluster is required as a cofactor.

It localises to the cell membrane. It catalyses the reaction a quinone + NADH + 5 H(+)(in) = a quinol + NAD(+) + 4 H(+)(out). Functionally, NDH-1 shuttles electrons from NADH, via FMN and iron-sulfur (Fe-S) centers, to quinones in the respiratory chain. The immediate electron acceptor for the enzyme in this species is believed to be a menaquinone. Couples the redox reaction to proton translocation (for every two electrons transferred, four hydrogen ions are translocated across the cytoplasmic membrane), and thus conserves the redox energy in a proton gradient. This Streptomyces griseus subsp. griseus (strain JCM 4626 / CBS 651.72 / NBRC 13350 / KCC S-0626 / ISP 5235) protein is NADH-quinone oxidoreductase subunit B 2.